The primary structure comprises 346 residues: N-acetyl-gamma-glutamyl-phosphate reductase (346 aa).

Residue Cys-150 is part of the active site.

This sequence belongs to the NAGSA dehydrogenase family. Type 1 subfamily.

The protein resides in the cytoplasm. It catalyses the reaction N-acetyl-L-glutamate 5-semialdehyde + phosphate + NADP(+) = N-acetyl-L-glutamyl 5-phosphate + NADPH + H(+). It participates in amino-acid biosynthesis; L-arginine biosynthesis; N(2)-acetyl-L-ornithine from L-glutamate: step 3/4. In terms of biological role, catalyzes the NADPH-dependent reduction of N-acetyl-5-glutamyl phosphate to yield N-acetyl-L-glutamate 5-semialdehyde. The polypeptide is N-acetyl-gamma-glutamyl-phosphate reductase (Acetivibrio thermocellus (strain ATCC 27405 / DSM 1237 / JCM 9322 / NBRC 103400 / NCIMB 10682 / NRRL B-4536 / VPI 7372) (Clostridium thermocellum)).